The chain runs to 550 residues: MSAKDILFDASARAKLKVGVDKLADAVKVTLGPAGRNVLIDKKFGAPTSTKDGVTVAKEIELEDSFENMGAQMVREVSSKTSDVAGDGTTTATVLAQAIYREGLKNVAAGARPIDLKRGIDKAVKEVIGELRTISNDISGKIEIAQVGTISANNDPEIGQLIADAMEKVGKDGVITVEEAKGMDTELKVVEGMQFDRGYLSPYFVTNSEKMDAELEDPYILIHDKKISNMKDLLPILEKTAQSGRPLMIISEDIEGEALATLVVNKLRGTLKVCAVKAPGFGDRRKAMLEDIAILTGGTVISEEKGYKLENATISYLGQAATVTVDKDNTTIVEGKGQADDIKARINEIKNQIDASTSDYDTEKLQERLAKLSGGVAVINIGASTEVEMKEKKARVEDALHATRAAVQEGIVAGGGVALIRAAKGLDNVQPENEDQKTGVEIVRRALEEPLRQIVANTGTTDGAVVVERVKQGEGDFGFNARTEEYEKMTEAGVVDPTKVTRTALENAASVAGILLTTEAAITDIKEEGGDMPAMPPGGMGGMGGMGGMM.

ATP is bound by residues 30–33, Lys51, 87–91, Gly415, and Asp496; these read TLGP and DGTTT. A disordered region spans residues 528–550; that stretch reads EGGDMPAMPPGGMGGMGGMGGMM. The span at 538–550 shows a compositional bias: gly residues; that stretch reads GGMGGMGGMGGMM.

It belongs to the chaperonin (HSP60) family. As to quaternary structure, forms a cylinder of 14 subunits composed of two heptameric rings stacked back-to-back. Interacts with the co-chaperonin GroES.

The protein resides in the cytoplasm. The enzyme catalyses ATP + H2O + a folded polypeptide = ADP + phosphate + an unfolded polypeptide.. Functionally, together with its co-chaperonin GroES, plays an essential role in assisting protein folding. The GroEL-GroES system forms a nano-cage that allows encapsulation of the non-native substrate proteins and provides a physical environment optimized to promote and accelerate protein folding. The protein is Chaperonin GroEL of Chlorobium phaeobacteroides (strain BS1).